A 333-amino-acid polypeptide reads, in one-letter code: tRNA-dihydrouridine(16) synthase (333 aa).

Residues Pro-19–Gln-21 and Gln-80 contribute to the FMN site. The active-site Proton donor is Cys-110. FMN is bound by residues Lys-151, Asn-211 to Asp-213, and Gly-235 to Arg-236.

The protein belongs to the Dus family. DusC subfamily. FMN serves as cofactor.

The enzyme catalyses 5,6-dihydrouridine(16) in tRNA + NADP(+) = uridine(16) in tRNA + NADPH + H(+). It catalyses the reaction 5,6-dihydrouridine(16) in tRNA + NAD(+) = uridine(16) in tRNA + NADH + H(+). Catalyzes the synthesis of 5,6-dihydrouridine (D), a modified base found in the D-loop of most tRNAs, via the reduction of the C5-C6 double bond in target uridines. Specifically modifies U16 in tRNAs. The protein is tRNA-dihydrouridine(16) synthase of Neisseria meningitidis serogroup B (strain ATCC BAA-335 / MC58).